A 471-amino-acid polypeptide reads, in one-letter code: Glutamate--tRNA ligase (471 aa).

The 'HIGH' region signature appears at P9–G19. Zn(2+)-binding residues include C98, C100, C125, and H127. Positions K237–R241 match the 'KMSKS' region motif. K240 provides a ligand contact to ATP.

Belongs to the class-I aminoacyl-tRNA synthetase family. Glutamate--tRNA ligase type 1 subfamily. In terms of assembly, monomer. Zn(2+) serves as cofactor.

Its subcellular location is the cytoplasm. The enzyme catalyses tRNA(Glu) + L-glutamate + ATP = L-glutamyl-tRNA(Glu) + AMP + diphosphate. Functionally, catalyzes the attachment of glutamate to tRNA(Glu) in a two-step reaction: glutamate is first activated by ATP to form Glu-AMP and then transferred to the acceptor end of tRNA(Glu). The sequence is that of Glutamate--tRNA ligase from Escherichia coli O6:K15:H31 (strain 536 / UPEC).